Consider the following 386-residue polypeptide: Methionine aminopeptidase 1 (386 aa).

At alanine 2 the chain carries N-acetylalanine. The C6H2-type zinc-finger motif lies at 6–59 (TRVCETDGCSSEAKLQCPTCIKLGIQGSYFCSQECFKGSWATHKLLHKKAKDEK). Residues cysteine 9, cysteine 14, cysteine 22, cysteine 25, cysteine 36, cysteine 40, histidine 48, and histidine 52 each coordinate Zn(2+). An a protein-binding site is contributed by histidine 203. 3 residues coordinate Zn(2+): aspartate 220, aspartate 231, and histidine 294. Histidine 301 lines the a protein pocket. Positions 327 and 358 each coordinate Zn(2+).

The protein belongs to the peptidase M24A family. Methionine aminopeptidase type 1 subfamily. As to quaternary structure, associates with the 60S ribosomal subunit of the 80S translational complex. Requires Zn(2+) as cofactor. Co(2+) serves as cofactor. The cofactor is Mn(2+). Fe(2+) is required as a cofactor.

The protein localises to the cytoplasm. It carries out the reaction Release of N-terminal amino acids, preferentially methionine, from peptides and arylamides.. Its function is as follows. Cotranslationally removes the N-terminal methionine from nascent proteins. The N-terminal methionine is often cleaved when the second residue in the primary sequence is small and uncharged (Met-Ala-, Cys, Gly, Pro, Ser, Thr, or Val). Required for normal progression through the cell cycle. The protein is Methionine aminopeptidase 1 (METAP1) of Homo sapiens (Human).